Here is a 157-residue protein sequence, read N- to C-terminus: XylDLEGF operon transcriptional activator 2 (157 aa).

In terms of domain architecture, HTH araC/xylS-type spans 39-140 (ERVVQFIEEN…GELPSDTLSL (102 aa)). 2 DNA-binding regions (H-T-H motif) span residues 56–77 (EQLA…EKHT) and 107–130 (ITEV…RSTF).

The protein localises to the cytoplasm. Regulatory protein of the TOL plasmid xyl operons. XylS activates the xylXYZLTEGFJQKIH operon required for the degradation of toluene, m-xylene and p-xylene. In Pseudomonas putida (Arthrobacter siderocapsulatus), this protein is XylDLEGF operon transcriptional activator 2 (xylS2).